A 562-amino-acid chain; its full sequence is NAD-dependent malic enzyme (562 aa).

Residue Y101 is the Proton donor of the active site. R154 lines the NAD(+) pocket. Residue K172 is the Proton acceptor of the active site. Residues E243, D244, and D267 each coordinate a divalent metal cation. D267 and N415 together coordinate NAD(+).

It belongs to the malic enzymes family. As to quaternary structure, homotetramer. Requires Mg(2+) as cofactor. The cofactor is Mn(2+).

The catalysed reaction is (S)-malate + NAD(+) = pyruvate + CO2 + NADH. It carries out the reaction oxaloacetate + H(+) = pyruvate + CO2. The chain is NAD-dependent malic enzyme from Shewanella sp. (strain MR-4).